A 1388-amino-acid chain; its full sequence is ABC transporter G family member 52 (1388 aa).

A disordered region spans residues 1-24; sequence MDDAGEICSFSRSSSSAREDDEED. In terms of domain architecture, ABC transporter 1 spans 135 to 406; that stretch reads TNALCITKKI…FKSVGFKCPE (272 aa). 168–175 is a binding site for ATP; sequence GPPGSGKT. The ABC transmembrane type-2 1 domain maps to 484-697; that stretch reads ELLKANIYRE…ALNALAVNEF (214 aa). The next 7 helical transmembrane spans lie at 503–523, 541–561, 590–610, 621–641, 646–666, 675–695, and 732–752; these read LYIF…TVFI, ALFY…GPAI, IPIS…VIGF, FLVL…IVAL, VIAS…CGFI, WWIW…LAVN, and ISIG…TICL. An ABC transporter 2 domain is found at 791–1043; it reads ITFEDIRYSV…ELIKYFEAIQ (253 aa). Residue 836-843 participates in ATP binding; the sequence is GVSGAGKT. One can recognise an ABC transmembrane type-2 2 domain in the interval 1116–1330; that stretch reads TQWLACLWKQ…TLNGLLTSQF (215 aa). A run of 7 helical transmembrane segments spans residues 1136-1156, 1167-1183, 1223-1243, 1250-1270, 1280-1300, 1305-1325, and 1357-1377; these read IVVR…MFWG, LFSI…AMGV, FPYI…MVGY, FLWY…YGMM, MSAV…GFLI, IPVW…LNGL, and LLWV…FLFG.

The protein belongs to the ABC transporter superfamily. ABCG family. PDR (TC 3.A.1.205) subfamily.

It is found in the membrane. Functionally, may be a general defense protein. The polypeptide is ABC transporter G family member 52 (Oryza sativa subsp. japonica (Rice)).